Reading from the N-terminus, the 711-residue chain is Polyribonucleotide nucleotidyltransferase (711 aa).

Residues Asp489 and Asp495 each coordinate Mg(2+). The KH domain occupies 556–615; it reads PRIHTIKISPDKIKDVIGKGGSVIRALTEETGTTIEIEDDGTVKIAATDGEKAKHAIRRI. Residues 625–693 enclose the S1 motif domain; sequence GRIYNGKVTR…RQGRVRLSIK (69 aa).

Belongs to the polyribonucleotide nucleotidyltransferase family. In terms of assembly, component of the RNA degradosome, which is a multiprotein complex involved in RNA processing and mRNA degradation. Mg(2+) serves as cofactor.

The protein localises to the cytoplasm. It carries out the reaction RNA(n+1) + phosphate = RNA(n) + a ribonucleoside 5'-diphosphate. Its function is as follows. Involved in mRNA degradation. Catalyzes the phosphorolysis of single-stranded polyribonucleotides processively in the 3'- to 5'-direction. In Cronobacter sakazakii (strain ATCC BAA-894) (Enterobacter sakazakii), this protein is Polyribonucleotide nucleotidyltransferase.